A 288-amino-acid polypeptide reads, in one-letter code: MGSLKEIDTRIKSTKKMKQITKAMNMVSSSKLRRAESNAKQFRPYMEKMQDAITAVAGSDKNSRHPMLQQREVKKSAYLVITSDKGLAGAYNANVLKHLIKDIEEKHASKDDYSIVVLGQTGVDFLKNKGYDIHDSLIDVPDQPSFKEVQAIAKKAIGLYSEGEVDEVKIYFSHFVSVLENTPSTKTVLPLSPEDSSLGHGQMSSYEFEPDKEAILSVILPQYVESLIYGTILDAKASEHATRMTAMKNASDNASEIIDDLSIQYNRARQAAITQQITEIVGGSVALE.

The protein belongs to the ATPase gamma chain family. F-type ATPases have 2 components, CF(1) - the catalytic core - and CF(0) - the membrane proton channel. CF(1) has five subunits: alpha(3), beta(3), gamma(1), delta(1), epsilon(1). CF(0) has three main subunits: a, b and c.

The protein localises to the cell membrane. In terms of biological role, produces ATP from ADP in the presence of a proton gradient across the membrane. The gamma chain is believed to be important in regulating ATPase activity and the flow of protons through the CF(0) complex. The polypeptide is ATP synthase gamma chain (Staphylococcus saprophyticus subsp. saprophyticus (strain ATCC 15305 / DSM 20229 / NCIMB 8711 / NCTC 7292 / S-41)).